Reading from the N-terminus, the 225-residue chain is Deoxyribose-phosphate aldolase (225 aa).

Asp96 serves as the catalytic Proton donor/acceptor. The Schiff-base intermediate with acetaldehyde role is filled by Lys157. The active-site Proton donor/acceptor is the Lys185.

The protein belongs to the DeoC/FbaB aldolase family. DeoC type 1 subfamily.

The protein resides in the cytoplasm. The enzyme catalyses 2-deoxy-D-ribose 5-phosphate = D-glyceraldehyde 3-phosphate + acetaldehyde. Its pathway is carbohydrate degradation; 2-deoxy-D-ribose 1-phosphate degradation; D-glyceraldehyde 3-phosphate and acetaldehyde from 2-deoxy-alpha-D-ribose 1-phosphate: step 2/2. Catalyzes a reversible aldol reaction between acetaldehyde and D-glyceraldehyde 3-phosphate to generate 2-deoxy-D-ribose 5-phosphate. This is Deoxyribose-phosphate aldolase from Microcystis aeruginosa (strain NIES-843 / IAM M-2473).